Reading from the N-terminus, the 117-residue chain is Hydrogenase maturation factor HypA (117 aa).

His2 is a binding site for Ni(2+). Cys73, Cys76, Cys89, and Cys92 together coordinate Zn(2+).

Belongs to the HypA/HybF family.

Involved in the maturation of [NiFe] hydrogenases. Required for nickel insertion into the metal center of the hydrogenase. The protein is Hydrogenase maturation factor HypA of Pelodictyon phaeoclathratiforme (strain DSM 5477 / BU-1).